The chain runs to 160 residues: Transcription elongation factor GreB (160 aa).

This sequence belongs to the GreA/GreB family. GreB subfamily.

Necessary for efficient RNA polymerase transcription elongation past template-encoded arresting sites. The arresting sites in DNA have the property of trapping a certain fraction of elongating RNA polymerases that pass through, resulting in locked ternary complexes. Cleavage of the nascent transcript by cleavage factors such as GreA or GreB allows the resumption of elongation from the new 3'terminus. GreB releases sequences of up to 9 nucleotides in length. This Vibrio vulnificus (strain YJ016) protein is Transcription elongation factor GreB.